Consider the following 824-residue polypeptide: FT-interacting protein 1 (824 aa).

C2 domains lie at 48-170 (WLGL…PQWY), 217-341 (VRGE…SRWF), and 385-522 (YISD…THAY). A run of 3 helical transmembrane segments spans residues 625 to 645 (AVSL…VCHW), 657 to 677 (LLLI…LYMF), and 764 to 784 (ATCL…VTPF).

The protein belongs to the MCTP family. In terms of assembly, interacts with RFT1 and PI4KG4. As to expression, specifically expressed in the phloem including companion cells.

The protein resides in the endoplasmic reticulum membrane. Its function is as follows. Involved in the export of the long day-specific flower-promoting signal (florigen) RFT1 from the phloem companion cells to sieve elements. Promotes flowering under long days through the transport of RFT1 from the leaves to the shoot apical meristem (SAM). In Oryza sativa subsp. japonica (Rice), this protein is FT-interacting protein 1.